We begin with the raw amino-acid sequence, 284 residues long: Putative thiosulfate sulfurtransferase SseB (284 aa).

2 consecutive Rhodanese domains span residues 20–138 and 169–280; these read AGDP…SIET and GAGG…RPVG. Arg-183 is a substrate binding site. Cys-241 (cysteine persulfide intermediate) is an active-site residue.

It carries out the reaction thiosulfate + hydrogen cyanide = thiocyanate + sulfite + 2 H(+). This is Putative thiosulfate sulfurtransferase SseB (sseB) from Mycobacterium tuberculosis (strain CDC 1551 / Oshkosh).